The sequence spans 262 residues: Ribosomal RNA small subunit methyltransferase A (262 aa).

S-adenosyl-L-methionine-binding residues include isoleucine 18, glycine 43, glutamate 65, aspartate 91, and asparagine 110.

It belongs to the class I-like SAM-binding methyltransferase superfamily. rRNA adenine N(6)-methyltransferase family. RsmA subfamily.

The protein resides in the cytoplasm. It catalyses the reaction adenosine(1518)/adenosine(1519) in 16S rRNA + 4 S-adenosyl-L-methionine = N(6)-dimethyladenosine(1518)/N(6)-dimethyladenosine(1519) in 16S rRNA + 4 S-adenosyl-L-homocysteine + 4 H(+). Its function is as follows. Specifically dimethylates two adjacent adenosines (A1518 and A1519) in the loop of a conserved hairpin near the 3'-end of 16S rRNA in the 30S particle. May play a critical role in biogenesis of 30S subunits. This is Ribosomal RNA small subunit methyltransferase A from Ehrlichia ruminantium (strain Gardel).